A 551-amino-acid chain; its full sequence is MRATAILRDLLASALENQGIAWPVKTTIEPPRDKAHGDLATNVAMMASKAAKKPPRELAESLRQALAADPRLASVEVAGPGFLNVAFTPAFWQETVCDVAKAGDGYGLLDIGQGVKIQVEFVSANPTGPLHIGHGRGAAVGDSLARVLRAAGFTVETEYYINDAGRQMRILGMSILYRYKELIGEPVTEPEDYYRGEYVIPLAQDMIDAHGRKLLEMPEAEATDICRLHGEREILAGIKKDLEDFRVHHDVWFPESTLLAAGAVDAAFNELRDKKLAYDQDGAFWFASTAFGDDKDRVLVKSGGELTYFASDIAYHADKFRRGFDVVVDIWGADHHGYVPRMKACVSALGRDPEASLKVILVQLVNLLKGGEQIAMSTRAGKFETLADVVKEVGADSARFMFLSRKSDSHLDFDLDAVKEKSMDNPVYYVQYAHARVRSLFAKAQERGQAVAETSPELLALLTTDEDLELLKLLEQYPDTVAAAARTFSPHLVSFYLRDLAGRLHRYYTVNPVLTAGSDDLASARLRLLDAVAQTIKNGLDLLGVSAPDKM.

The 'HIGH' region signature appears at 124–134 (ANPTGPLHIGH).

Belongs to the class-I aminoacyl-tRNA synthetase family. In terms of assembly, monomer.

The protein resides in the cytoplasm. The catalysed reaction is tRNA(Arg) + L-arginine + ATP = L-arginyl-tRNA(Arg) + AMP + diphosphate. In Solidesulfovibrio magneticus (strain ATCC 700980 / DSM 13731 / RS-1) (Desulfovibrio magneticus), this protein is Arginine--tRNA ligase.